The chain runs to 452 residues: Tripartite motif-containing protein 51G (452 aa).

The RING-type zinc finger occupies 15–56 (CPICMNYFIDPVTIDCGHSFCRPCFYLNWQDMAVLAQCSKCK). The B box-type zinc-finger motif lies at 88–129 (SEEQICGTHRETKEMFCEVDKSLLCLLCSNSQEHRNHRHCPT). The Zn(2+) site is built by C93, H96, C115, and H121. One can recognise a B30.2/SPRY domain in the interval 269–452 (EFSAGPIIGL…LWPIICCSHF (184 aa)).

This sequence belongs to the TRIM/RBCC family.

In Homo sapiens (Human), this protein is Tripartite motif-containing protein 51G.